A 3387-amino-acid chain; its full sequence is Genome polyprotein (3387 aa).

Topologically, residues 1 to 100 are cytoplasmic; sequence MNQRKKVVRP…LNILNGRKRS (100 aa). A hydrophobic; homodimerization of capsid protein C region spans residues 36 to 71; the sequence is LFSGKGPLRMVLAFITFLRVLSIPPTAGILKRWGQL. Positions 100 to 113 are cleaved as a propeptide — ER anchor for the capsid protein C, removed in mature form by serine protease NS3; the sequence is STVTLLCLIPTVMA. Residues 101-117 traverse the membrane as a helical segment; the sequence is TVTLLCLIPTVMAFHLS. Topologically, residues 118 to 237 are extracellular; it reads TRDGEPLMIV…GAWKHAQRVE (120 aa). Asn182 is a glycosylation site (N-linked (GlcNAc...) asparagine; by host). The helical transmembrane segment at 238–258 threads the bilayer; the sequence is SWILRNPGFALLAGFMAYMIG. The Cytoplasmic segment spans residues 259 to 265; sequence QTGIQRT. The helical transmembrane segment at 266 to 279 threads the bilayer; it reads VFFVLMMLVAPSYG. The Extracellular portion of the chain corresponds to 280 to 725; it reads MRCIGVGNRD…HQVFGSVYTT (446 aa). 4 cysteine pairs are disulfide-bonded: Cys282/Cys309, Cys339/Cys400, Cys353/Cys384, and Cys371/Cys395. N-linked (GlcNAc...) asparagine; by host glycosylation is present at Asn346. A fusion peptide region spans residues 377 to 390; it reads DRGWGNGCGLFGKG. Asn432 is a glycosylation site (N-linked (GlcNAc...) asparagine; by host). Cystine bridges form between Cys464–Cys564 and Cys581–Cys612. The chain crosses the membrane as a helical span at residues 726–746; it reads MFGGVSWMVRILIGLLVLWIG. Over 747–751 the chain is Cytoplasmic; the sequence is TNSRN. Residues 752–772 form a helical membrane-spanning segment; sequence TPMAMTCIAVGGITLFLGFTV. Residues 773 to 1193 lie on the Extracellular side of the membrane; it reads QADMGCVVSW…IMLGDTMLSR (421 aa). 6 cysteine pairs are disulfide-bonded: Cys778/Cys789, Cys829/Cys917, Cys953/Cys997, Cys1054/Cys1103, Cys1065/Cys1087, and Cys1086/Cys1090. 2 N-linked (GlcNAc...) asparagine; by host glycosylation sites follow: Asn904 and Asn981. The chain crosses the membrane as a helical span at residues 1194–1218; it reads VGGQTHLAIMIVFKMSPGYVLGVFL. At 1219–1224 the chain is on the lumenal side; that stretch reads RKLTSR. The chain crosses the membrane as a helical span at residues 1225-1243; that stretch reads ETALMVIGMAMTTVFSIPH. The Cytoplasmic portion of the chain corresponds to 1244-1267; sequence DLMELIDGISLGLILLKMVTHFDN. The chain crosses the membrane as a helical span at residues 1268–1288; it reads TQVGTLALSLTFIRSTMPLTM. Residue Ala1289 is a topological domain, lumenal. The helical transmembrane segment at 1290–1308 threads the bilayer; that stretch reads WRTIMAVLFAVTLIPLCRT. The Lumenal portion of the chain corresponds to 1309–1316; the sequence is SCLQKQSH. Residues 1317 to 1337 traverse the membrane as a helical segment; it reads WVEITAIILGAQALPVYLMTL. Residues 1338 to 1345 are Cytoplasmic-facing; the sequence is MKGASKRS. Residues 1346–1366 traverse the membrane as a helical segment; that stretch reads WPLNEGIMAVGLVSLLGSALL. Residues 1367–1369 are Lumenal-facing; the sequence is KND. The chain crosses the membrane as a helical span at residues 1370–1390; sequence VPLAGPMVAGGLLLAAYVMSG. Over 1391–1444 the chain is Cytoplasmic; that stretch reads SSADLSLERAANVQWDEMADITGSSPIIEVKQDEDGSFSIRDVEETNMITLLVK. The interval 1397 to 1436 is interacts with and activates NS3 protease; the sequence is LERAANVQWDEMADITGSSPIIEVKQDEDGSFSIRDVEET. Positions 1445-1465 form an intramembrane region, helical; sequence LALITVSGLYPLAIPITMTLW. Over 1466 to 2146 the chain is Cytoplasmic; that stretch reads YMWQVRTQRS…LNELPESLET (681 aa). Residues 1475-1652 form the Peptidase S7 domain; the sequence is SGALWDVPSP…ERIGEPDYEV (178 aa). Residues His1525, Asp1549, and Ser1609 each act as charge relay system; for serine protease NS3 activity in the active site. The region spanning 1654–1810 is the Helicase ATP-binding domain; sequence EDIFRKKRLT…QSNSPIEDIE (157 aa). The tract at residues 1658–1661 is important for RNA-binding; sequence RKKR. 1667–1674 provides a ligand contact to ATP; that stretch reads LHPGAGKT. The short motif at 1758–1761 is the DEAH box element; it reads DEAH. The 168-residue stretch at 1820-1987 folds into the Helicase C-terminal domain; sequence TGFDWITDYQ…IIPTLFGPER (168 aa). N6-acetyllysine; by host is present on Lys1862. A helical transmembrane segment spans residues 2147–2167; the sequence is LMLVALLGAMTAGIFLFFMQG. Residues 2168–2169 are Lumenal-facing; it reads KG. Positions 2170-2190 form an intramembrane region, helical; that stretch reads IGKLSVGLIAIAVASGLLWVA. A topological domain (lumenal) is located at residue Glu2191. Residues 2192–2212 traverse the membrane as a helical segment; that stretch reads IQPQWIAASIILEFFLMVLLI. The Cytoplasmic portion of the chain corresponds to 2213-2225; that stretch reads PEPEKQRTPQDNQ. The helical transmembrane segment at 2226–2246 threads the bilayer; that stretch reads LIYVILAILTIIGLVAANEMG. Topologically, residues 2247 to 2270 are lumenal; that stretch reads LIEKTKADFGFYQVKTETTILDVD. Residues 2271–2291 constitute an intramembrane region (helical); sequence LRPASAWTLYAVATTILTPML. Residues 2292 to 2301 are Lumenal-facing; that stretch reads RHTIENTSAN. Asn2297 and Asn2301 each carry an N-linked (GlcNAc...) asparagine; by host glycan. The helical intramembrane region spans 2302-2322; that stretch reads LSLAAIANQAAVLMGLGKGWP. Over 2323-2343 the chain is Lumenal; the sequence is LHRMDLGVPLLAMGCYSQVNP. The chain crosses the membrane as a helical span at residues 2344–2364; the sequence is TTLTASLVMLLVHYAIIGPGL. Residues 2365-2409 lie on the Cytoplasmic side of the membrane; sequence QAKATREAQKRTAAGIMKNPTVDGITVIDLEPISYDPKFEKQLGQ. The chain crosses the membrane as a helical span at residues 2410–2430; sequence VMLLVLCAGQLLLMRTTWAFC. Residues 2431–2455 are Lumenal-facing; that stretch reads EVLTLATGPVLTLWEGNPGRFWNTT. N-linked (GlcNAc...) asparagine; by host glycosylation occurs at Asn2453. The chain crosses the membrane as a helical span at residues 2456–2476; sequence IAVSTANIFRGSYLAGAGLAF. Residues 2477–3387 are Cytoplasmic-facing; that stretch reads SLIKNAQTPR…SALSESEGVL (911 aa). Positions 2489 to 2751 constitute an mRNA cap 0-1 NS5-type MT domain; it reads TGTTGETLGE…DVDLGAGTRS (263 aa). Residue Ser2543 coordinates S-adenosyl-L-methionine. A Phosphoserine modification is found at Ser2543. Lys2548 (for 2'-O-MTase activity) is an active-site residue. An SUMO-interacting motif motif is present at residues 2564–2567; it reads VVDL. S-adenosyl-L-methionine-binding residues include Gly2573, Trp2574, Thr2591, Lys2592, Asp2618, and Val2619. The active-site For 2'-O-MTase activity is Asp2633. Position 2634 (Ile2634) interacts with S-adenosyl-L-methionine. Catalysis depends on for 2'-O-MTase activity residues Lys2668 and Glu2704. Tyr2706 lines the S-adenosyl-L-methionine pocket. Residues Glu2925, His2929, Cys2934, and Cys2937 each contribute to the Zn(2+) site. Positions 3016 to 3166 constitute a RdRp catalytic domain; it reads LMYADDTAGW…PLDERFSTSL (151 aa). Residues His3200, Cys3216, and Cys3335 each coordinate Zn(2+).

This sequence in the N-terminal section; belongs to the class I-like SAM-binding methyltransferase superfamily. mRNA cap 0-1 NS5-type methyltransferase family. Homodimer. Interacts (via N-terminus) with host EXOC1 (via C-terminus); this interaction results in EXOC1 degradation through the proteasome degradation pathway. In terms of assembly, forms heterodimers with envelope protein E in the endoplasmic reticulum and Golgi. As to quaternary structure, homodimer; in the endoplasmic reticulum and Golgi. Interacts with protein prM. Interacts with non-structural protein 1. Homodimer; Homohexamer when secreted. Interacts with envelope protein E. In terms of assembly, interacts (via N-terminus) with serine protease NS3. As to quaternary structure, forms a heterodimer with serine protease NS3. May form homooligomers. Forms a heterodimer with NS2B. Interacts with NS4B. Interacts with unphosphorylated RNA-directed RNA polymerase NS5; this interaction stimulates RNA-directed RNA polymerase NS5 guanylyltransferase activity. Interacts with host SHFL. In terms of assembly, interacts with host MAVS; this interaction inhibits the synthesis of IFN-beta. Interacts with host SHFL. Interacts with host AUP1; the interaction occurs in the presence of Dengue virus NS4B and induces lipophagy which facilitates production of virus progeny particles. As to quaternary structure, interacts with serine protease NS3. Homodimer. Interacts with host STAT2; this interaction inhibits the phosphorylation of the latter, and, when all viral proteins are present (polyprotein), targets STAT2 for degradation. Interacts with serine protease NS3. Interacts with host PAF1 complex; the interaction may prevent the recruitment of the PAF1 complex to interferon-responsive genes, and thus reduces the immune response. Post-translationally, specific enzymatic cleavages in vivo yield mature proteins. Cleavages in the lumen of endoplasmic reticulum are performed by host signal peptidase, whereas cleavages in the cytoplasmic side are performed by serine protease NS3. Signal cleavage at the 2K-4B site requires a prior NS3 protease-mediated cleavage at the 4A-2K site. Cleaved in post-Golgi vesicles by a host furin, releasing the mature small envelope protein M, and peptide pr. This cleavage is incomplete as up to 30% of viral particles still carry uncleaved prM. In terms of processing, N-glycosylated. Post-translationally, N-glycosylated. The excreted form is glycosylated and this is required for efficient secretion of the protein from infected cells. Acetylated by host KAT5. Acetylation modulates NS3 RNA-binding and unwinding activities and plays an important positive role for viral replication. In terms of processing, sumoylation of RNA-directed RNA polymerase NS5 increases NS5 protein stability allowing proper viral RNA replication. Post-translationally, phosphorylated on serines residues. This phosphorylation may trigger NS5 nuclear localization.

The protein resides in the virion. It is found in the host nucleus. Its subcellular location is the host cytoplasm. The protein localises to the host perinuclear region. It localises to the secreted. The protein resides in the virion membrane. It is found in the host endoplasmic reticulum membrane. Its subcellular location is the host mitochondrion. It catalyses the reaction Selective hydrolysis of -Xaa-Xaa-|-Yaa- bonds in which each of the Xaa can be either Arg or Lys and Yaa can be either Ser or Ala.. The catalysed reaction is RNA(n) + a ribonucleoside 5'-triphosphate = RNA(n+1) + diphosphate. The enzyme catalyses a ribonucleoside 5'-triphosphate + H2O = a ribonucleoside 5'-diphosphate + phosphate + H(+). It carries out the reaction ATP + H2O = ADP + phosphate + H(+). It catalyses the reaction a 5'-end (5'-triphosphoguanosine)-ribonucleoside in mRNA + S-adenosyl-L-methionine = a 5'-end (N(7)-methyl 5'-triphosphoguanosine)-ribonucleoside in mRNA + S-adenosyl-L-homocysteine. The catalysed reaction is a 5'-end (N(7)-methyl 5'-triphosphoguanosine)-ribonucleoside in mRNA + S-adenosyl-L-methionine = a 5'-end (N(7)-methyl 5'-triphosphoguanosine)-(2'-O-methyl-ribonucleoside) in mRNA + S-adenosyl-L-homocysteine + H(+). Its function is as follows. Plays a role in virus budding by binding to the cell membrane and gathering the viral RNA into a nucleocapsid that forms the core of a mature virus particle. During virus entry, may induce genome penetration into the host cytoplasm after hemifusion induced by the surface proteins. Can migrate to the cell nucleus where it modulates host functions. Overcomes the anti-viral effects of host EXOC1 by sequestering and degrading the latter through the proteasome degradation pathway. In terms of biological role, inhibits RNA silencing by interfering with host Dicer. Prevents premature fusion activity of envelope proteins in trans-Golgi by binding to envelope protein E at pH6.0. After virion release in extracellular space, gets dissociated from E dimers. Functionally, acts as a chaperone for envelope protein E during intracellular virion assembly by masking and inactivating envelope protein E fusion peptide. prM is the only viral peptide matured by host furin in the trans-Golgi network probably to avoid catastrophic activation of the viral fusion activity in acidic Golgi compartment prior to virion release. prM-E cleavage is inefficient, and many virions are only partially matured. These uncleaved prM would play a role in immune evasion. Its function is as follows. May play a role in virus budding. Exerts cytotoxic effects by activating a mitochondrial apoptotic pathway through M ectodomain. May display a viroporin activity. In terms of biological role, binds to host cell surface receptor and mediates fusion between viral and cellular membranes. Envelope protein is synthesized in the endoplasmic reticulum in the form of heterodimer with protein prM. They play a role in virion budding in the ER, and the newly formed immature particle is covered with 60 spikes composed of heterodimer between precursor prM and envelope protein E. The virion is transported to the Golgi apparatus where the low pH causes dissociation of PrM-E heterodimers and formation of E homodimers. prM-E cleavage is inefficient, and many virions are only partially matured. These uncleaved prM would play a role in immune evasion. Involved in immune evasion, pathogenesis and viral replication. Once cleaved off the polyprotein, is targeted to three destinations: the viral replication cycle, the plasma membrane and the extracellular compartment. Essential for viral replication. Required for formation of the replication complex and recruitment of other non-structural proteins to the ER-derived membrane structures. Excreted as a hexameric lipoparticle that plays a role against host immune response. Antagonizing the complement function. Binds to the host macrophages and dendritic cells. Inhibits signal transduction originating from Toll-like receptor 3 (TLR3). Functionally, disrupts the host endothelial glycocalyx layer of host pulmonary microvascular endothelial cells, inducing degradation of sialic acid and shedding of heparan sulfate proteoglycans. NS1 induces expression of sialidases, heparanase, and activates cathepsin L, which activates heparanase via enzymatic cleavage. These effects are probably linked to the endothelial hyperpermeability observed in severe dengue disease. Its function is as follows. Component of the viral RNA replication complex that functions in virion assembly and antagonizes the host immune response. In terms of biological role, required cofactor for the serine protease function of NS3. May have membrane-destabilizing activity and form viroporins. Displays three enzymatic activities: serine protease, NTPase and RNA helicase. NS3 serine protease, in association with NS2B, performs its autocleavage and cleaves the polyprotein at dibasic sites in the cytoplasm: C-prM, NS2A-NS2B, NS2B-NS3, NS3-NS4A, NS4A-2K and NS4B-NS5. NS3 RNA helicase binds RNA and unwinds dsRNA in the 3' to 5' direction. Functionally, regulates the ATPase activity of the NS3 helicase activity. NS4A allows NS3 helicase to conserve energy during unwinding. Plays a role in the inhibition of the host innate immune response. Interacts with host MAVS and thereby prevents the interaction between RIGI and MAVS. In turn, IFN-beta production is impaired. Interacts with host AUP1 which mediates induction of lipophagy in host cells and facilitates production of virus progeny particles. Its function is as follows. Functions as a signal peptide for NS4B and is required for the interferon antagonism activity of the latter. In terms of biological role, induces the formation of ER-derived membrane vesicles where the viral replication takes place. Inhibits interferon (IFN)-induced host STAT1 phosphorylation and nuclear translocation, thereby preventing the establishment of cellular antiviral state by blocking the IFN-alpha/beta pathway. Replicates the viral (+) and (-) RNA genome, and performs the capping of genomes in the cytoplasm. NS5 methylates viral RNA cap at guanine N-7 and ribose 2'-O positions. Besides its role in RNA genome replication, also prevents the establishment of cellular antiviral state by blocking the interferon-alpha/beta (IFN-alpha/beta) signaling pathway. Inhibits host TYK2 and STAT2 phosphorylation, thereby preventing activation of JAK-STAT signaling pathway. May reduce immune responses by preventing the recruitment of the host PAF1 complex to interferon-responsive genes. This Aedes aegypti (Yellowfever mosquito) protein is Genome polyprotein.